We begin with the raw amino-acid sequence, 59 residues long: Small ribosomal subunit protein bS21 (59 aa).

The tract at residues 34–59 (KHEHYEKPSVKRKKKSEAARRRKRSF) is disordered. Over residues 43-59 (VKRKKKSEAARRRKRSF) the composition is skewed to basic residues.

This sequence belongs to the bacterial ribosomal protein bS21 family.

The sequence is that of Small ribosomal subunit protein bS21 from Desulforudis audaxviator (strain MP104C).